The sequence spans 214 residues: Putative F-box protein At3g58910 (214 aa).

The F-box domain maps to Met-1–Leu-47.

In Arabidopsis thaliana (Mouse-ear cress), this protein is Putative F-box protein At3g58910.